A 276-amino-acid polypeptide reads, in one-letter code: Diaminopimelate epimerase (276 aa).

Substrate-binding residues include N13, Q46, and N66. The active-site Proton donor is C75. Substrate contacts are provided by residues 76–77 (GN), N159, N192, and 210–211 (ER). The Proton acceptor role is filled by C219. 220 to 221 (GT) contributes to the substrate binding site.

The protein belongs to the diaminopimelate epimerase family. Homodimer.

Its subcellular location is the cytoplasm. The enzyme catalyses (2S,6S)-2,6-diaminopimelate = meso-2,6-diaminopimelate. Its pathway is amino-acid biosynthesis; L-lysine biosynthesis via DAP pathway; DL-2,6-diaminopimelate from LL-2,6-diaminopimelate: step 1/1. In terms of biological role, catalyzes the stereoinversion of LL-2,6-diaminopimelate (L,L-DAP) to meso-diaminopimelate (meso-DAP), a precursor of L-lysine and an essential component of the bacterial peptidoglycan. The polypeptide is Diaminopimelate epimerase (Cellvibrio japonicus (strain Ueda107) (Pseudomonas fluorescens subsp. cellulosa)).